The following is a 1343-amino-acid chain: MIYSYTEKKRIRENFGKQPKILDIPYLLSIQIDSFKKFIEPKKNNYQGLESAFQSIFPIRSYNGCAELQYVSYTLGKKLFDMYESKTRGTTYSVPLRVKLQLIIYEKDSKNTNVKHIKEQEVYMGELPLMTHNGTFIINGTERVVVSQLHRSPGVFFDSDKGKTHSSGKILYNARIIPYRGSWLDVEFDPKDHLFIRIDRRRKIPATVLLHALNFSTEKILKIFFKHDIFYIKNKNIYMYLIPKRLKGEIIPFEIIKNKKRYIKKGERITTEHIKKLKKKKIKTIQIPEEYLYGKTISKNYYHPKTKEILIKSNTTLTQDEFNKIKNFNNKKFYVLFTNNIDNGAYISETLKIDTTKDRLTALIEIYKIMRPGEPPTKEAAENLFNNLFFSQERYDLSPVGRMKFNKSLKRKEKKGSGILNKEDIIDVIKKLINIKNGKGEIDDIDHLSNRRVRSVGEMVENQFRIGLVRVERAVRERLSLSDLDTLMPQDIINAKPISSAIKEFFGSSQLSQFMDQNNPLAEITHKRRISALGIGGLTRERAGFEVRDVHPTHYGRVCPVETPEGPNIGLINSLSIYARTNQYGFLETPYRKVKNGTVTTKIKYLSAIEEGNYIIAQANTKINKFGKFYKKFVTCRYNGEFGLFKNKKVNYMDISTQQIVSVGASLIPFLEHDDANRALMGANMQRQAVPTIKSEKPLVGTGMERSVAIDSGVTIIAKRSGKIEYVDASRIVVRIKDEKIRTYESGIDIYNLTKYSRSNQNTCINQIPCINLNDSIKKGDVLADGPSTDLGELALGQNMRVAFMPWNGYNFEDSILISEKVEREDKFTTIHIQELSCICRDTKLGIEEITSDIPNIGESALSKLDTSGIIYIGADVSSGDVLVGKVTPKGETQLTPEEKLLRAIFGEKASDVKDSSLRVPNGTNGTVIDVQIFTRDGVKKDKRTIEIEEMLLKKAKKDLTEELKIFELNIINRINKILLTLKTKINCIVANSLNEYFKKKIKYPKKIKKKIHTLKIQYKQLQKKFKKKIKEKTKKIIQGDELAPGILKIVKIFLAVKRKIQPGDKMAGRHGNKGVVSKINPVEDMPYDNNGEPIDIVLNPLGVPSRMNLGQILETHLGLAAKGIGNIINRMLKTNKKIYKIRKFLQKVYNLGENINQKINLDNFSDIEILQLAKNLRIGLPIATPVFDGVNEKEIKKLLKMSNFSTSGQITLFDGRTGEKFERNVTVGYMYMLKLNHLVDDKMHARSTGSYSLITQQPLGGKAQFGGQRFGEMEVWALEAYGASHTLQEMLTVKSDDVTGRTKMYKNIVSGKHNMEPGMPESFNVLVKEIRSLGINIELNNN.

The protein belongs to the RNA polymerase beta chain family. In terms of assembly, the RNAP catalytic core consists of 2 alpha, 1 beta, 1 beta' and 1 omega subunit. When a sigma factor is associated with the core the holoenzyme is formed, which can initiate transcription.

It catalyses the reaction RNA(n) + a ribonucleoside 5'-triphosphate = RNA(n+1) + diphosphate. In terms of biological role, DNA-dependent RNA polymerase catalyzes the transcription of DNA into RNA using the four ribonucleoside triphosphates as substrates. The chain is DNA-directed RNA polymerase subunit beta from Buchnera aphidicola subsp. Cinara cedri (strain Cc).